Here is a 725-residue protein sequence, read N- to C-terminus: Methionine--tRNA ligase (725 aa).

The short motif at 27 to 37 (PYANGQIHIGH) is the 'HIGH' region element. Zn(2+)-binding residues include Cys158, Cys161, Cys171, and Cys174. Residues 348–352 (KMSKS) carry the 'KMSKS' region motif. Lys351 lines the ATP pocket. In terms of domain architecture, tRNA-binding spans 619–725 (DFAKIDLRIA…SGAKPGMRVK (107 aa)).

The protein belongs to the class-I aminoacyl-tRNA synthetase family. MetG type 1 subfamily. As to quaternary structure, homodimer. Zn(2+) is required as a cofactor.

It localises to the cytoplasm. The enzyme catalyses tRNA(Met) + L-methionine + ATP = L-methionyl-tRNA(Met) + AMP + diphosphate. Functionally, is required not only for elongation of protein synthesis but also for the initiation of all mRNA translation through initiator tRNA(fMet) aminoacylation. This chain is Methionine--tRNA ligase, found in Burkholderia pseudomallei (strain 668).